The primary structure comprises 449 residues: uncharacterized protein (449 aa).

2 disordered regions span residues 1-58 (MVKR…SLSS) and 71-125 (EALE…VVEL). A compositionally biased stretch (basic and acidic residues) spans 30-46 (KQRDELREKQKRKREDS). The span at 103–124 (SDDDDDDNEEEDDNGFEDQVVE) shows a compositional bias: acidic residues.

It belongs to the bystin family.

This is an uncharacterized protein from Caenorhabditis elegans.